Reading from the N-terminus, the 73-residue chain is EAGEECDCGSPANPCCDAATCKLRPGAQCADGLCCDQCRFIKKGTVCRVARGDWNDDTCTGQSADCPRNGLYG.

One can recognise a Disintegrin domain in the interval 1–73; that stretch reads EAGEECDCGS…ADCPRNGLYG (73 aa). Disulfide bonds link Cys-6–Cys-21, Cys-8–Cys-16, Cys-15–Cys-38, Cys-29–Cys-35, Cys-34–Cys-59, and Cys-47–Cys-66. The short motif at 51 to 53 is the Cell attachment site element; the sequence is RGD.

This sequence belongs to the venom metalloproteinase (M12B) family. P-II subfamily. P-IIa sub-subfamily. As to quaternary structure, monomer (disintegrin). Expressed by the venom gland.

Its subcellular location is the secreted. Inhibits fibrinogen interaction with platelets. Acts by binding to alpha-IIb/beta-3 (ITGA2B/ITGB3) on the platelet surface and inhibits aggregation induced by ADP, thrombin, platelet-activating factor and collagen. This is Disintegrin lutosin from Crotalus lutosus (Great basin rattlesnake).